We begin with the raw amino-acid sequence, 349 residues long: uncharacterized protein (349 aa).

The N-terminal stretch at 1-16 (MLFKISFLALIASALA) is a signal peptide. At 17-326 (MSINSPTNGD…SSSSSSSAAS (310 aa)) the chain is on the lumenal side. Disordered regions lie at residues 115–190 (ASSS…SSYR) and 243–322 (TNGT…SSSS). Low complexity-rich tracts occupy residues 116 to 176 (SSSS…SSRT), 243 to 278 (TNGT…TASG), and 289 to 322 (STND…SSSS). A helical transmembrane segment spans residues 327–347 (LVSQPVGISAVIAFFAVALSL). At 348–349 (TL) the chain is on the cytoplasmic side.

The protein localises to the endoplasmic reticulum membrane. This is an uncharacterized protein from Schizosaccharomyces pombe (strain 972 / ATCC 24843) (Fission yeast).